The following is a 220-amino-acid chain: Octanoyltransferase (220 aa).

A BPL/LPL catalytic domain is found at 29–217 (GRAPEMIWLL…CFEETFGPLP (189 aa)). Residues 68–75 (RGGQYTYH), 148–150 (AIG), and 161–163 (GLS) contribute to the substrate site. C179 functions as the Acyl-thioester intermediate in the catalytic mechanism.

It belongs to the LipB family.

The protein localises to the cytoplasm. It catalyses the reaction octanoyl-[ACP] + L-lysyl-[protein] = N(6)-octanoyl-L-lysyl-[protein] + holo-[ACP] + H(+). The protein operates within protein modification; protein lipoylation via endogenous pathway; protein N(6)-(lipoyl)lysine from octanoyl-[acyl-carrier-protein]: step 1/2. Functionally, catalyzes the transfer of endogenously produced octanoic acid from octanoyl-acyl-carrier-protein onto the lipoyl domains of lipoate-dependent enzymes. Lipoyl-ACP can also act as a substrate although octanoyl-ACP is likely to be the physiological substrate. The polypeptide is Octanoyltransferase (Dinoroseobacter shibae (strain DSM 16493 / NCIMB 14021 / DFL 12)).